Here is a 271-residue protein sequence, read N- to C-terminus: Formamidopyrimidine-DNA glycosylase (271 aa).

Proline 2 acts as the Schiff-base intermediate with DNA in catalysis. The active-site Proton donor is glutamate 3. The Proton donor; for beta-elimination activity role is filled by lysine 58. DNA-binding residues include histidine 91, arginine 110, and arginine 152. The FPG-type zinc-finger motif lies at asparagine 237 to lysine 271. Arginine 261 (proton donor; for delta-elimination activity) is an active-site residue.

The protein belongs to the FPG family. In terms of assembly, monomer. The cofactor is Zn(2+).

The enzyme catalyses Hydrolysis of DNA containing ring-opened 7-methylguanine residues, releasing 2,6-diamino-4-hydroxy-5-(N-methyl)formamidopyrimidine.. It catalyses the reaction 2'-deoxyribonucleotide-(2'-deoxyribose 5'-phosphate)-2'-deoxyribonucleotide-DNA = a 3'-end 2'-deoxyribonucleotide-(2,3-dehydro-2,3-deoxyribose 5'-phosphate)-DNA + a 5'-end 5'-phospho-2'-deoxyribonucleoside-DNA + H(+). Its function is as follows. Involved in base excision repair of DNA damaged by oxidation or by mutagenic agents. Acts as a DNA glycosylase that recognizes and removes damaged bases. Has a preference for oxidized purines, such as 7,8-dihydro-8-oxoguanine (8-oxoG). Has AP (apurinic/apyrimidinic) lyase activity and introduces nicks in the DNA strand. Cleaves the DNA backbone by beta-delta elimination to generate a single-strand break at the site of the removed base with both 3'- and 5'-phosphates. This is Formamidopyrimidine-DNA glycosylase from Saccharophagus degradans (strain 2-40 / ATCC 43961 / DSM 17024).